We begin with the raw amino-acid sequence, 322 residues long: RNA-binding protein KhpB (322 aa).

A jag_N domain region spans residues 3–52; the sequence is VFEGNTVAAAIAAGLKQLHRTRDQVEVEVIAEAKKGFLGLGKHPAQVRLT. Positions 58–82 are enriched in low complexity; the sequence is AAPATTPTSATATAQQSVATESTTA. Residues 58-162 form a disordered region; it reads AAPATTPTSA…AADQSQTPRT (105 aa). Phosphothreonine is present on Thr89. Residues 89 to 99 show a composition bias toward polar residues; sequence TVQTPKSTPTR. The segment covering 100–129 has biased composition (low complexity); that stretch reads QAKTSQATTSAAKPATSKAKAVAKPASMAV. Over residues 141 to 161 the composition is skewed to polar residues; it reads SKPATTSKTKSVAADQSQTPR. In terms of domain architecture, KH spans 174-251; the sequence is ETAVRALCDY…ASHVNVVLDV (78 aa). One can recognise an R3H domain in the interval 256 to 322; sequence ERRAATLKRL…HRAVVVAIRK (67 aa).

Forms a complex with KhpA.

It localises to the cytoplasm. In terms of biological role, a probable RNA chaperone. Forms a complex with KhpA which binds to cellular RNA and controls its expression. Plays a role in peptidoglycan (PG) homeostasis and cell length regulation. Its function is as follows. Necessary for correct cell elongation. The polypeptide is RNA-binding protein KhpB (Lactiplantibacillus plantarum (strain ATCC BAA-793 / NCIMB 8826 / WCFS1) (Lactobacillus plantarum)).